A 342-amino-acid polypeptide reads, in one-letter code: Ribosomal RNA small subunit methyltransferase C (342 aa).

The protein belongs to the methyltransferase superfamily. RsmC family. Monomer.

The protein localises to the cytoplasm. The enzyme catalyses guanosine(1207) in 16S rRNA + S-adenosyl-L-methionine = N(2)-methylguanosine(1207) in 16S rRNA + S-adenosyl-L-homocysteine + H(+). Functionally, specifically methylates the guanine in position 1207 of 16S rRNA in the 30S particle. The chain is Ribosomal RNA small subunit methyltransferase C from Salmonella enteritidis PT4 (strain P125109).